We begin with the raw amino-acid sequence, 425 residues long: Dihydroorotase (425 aa).

Zn(2+) contacts are provided by His61 and His63. Substrate is bound by residues 63–65 and Asn95; that span reads HLR. Residues Lys146, His175, His224, and Asp293 each coordinate Zn(2+). Lys146 bears the N6-carboxylysine mark. Asp293 is an active-site residue. Substrate-binding positions include His297 and 311-312; that span reads PG.

Belongs to the metallo-dependent hydrolases superfamily. DHOase family. Class I DHOase subfamily. The cofactor is Zn(2+).

It carries out the reaction (S)-dihydroorotate + H2O = N-carbamoyl-L-aspartate + H(+). The protein operates within pyrimidine metabolism; UMP biosynthesis via de novo pathway; (S)-dihydroorotate from bicarbonate: step 3/3. Functionally, catalyzes the reversible cyclization of carbamoyl aspartate to dihydroorotate. The chain is Dihydroorotase from Aeropyrum pernix (strain ATCC 700893 / DSM 11879 / JCM 9820 / NBRC 100138 / K1).